We begin with the raw amino-acid sequence, 230 residues long: Cytochrome c oxidase subunit 2 (230 aa).

Topologically, residues 1–26 (MATPAQLGLMDAASPVMEEMIYFHDH) are mitochondrial intermembrane. A helical transmembrane segment spans residues 27 to 48 (VMLVLILITCLIFYSMLVLISS). Over 49-62 (KYIYRFLTDGHVIE) the chain is Mitochondrial matrix. Residues 63–82 (TVWTVIPAIILVVVALPSLK) traverse the membrane as a helical segment. Topologically, residues 83-230 (LLYLTDELDN…GWCDMMLDEE (148 aa)) are mitochondrial intermembrane. The Cu cation site is built by histidine 161, cysteine 196, glutamate 198, cysteine 200, histidine 204, and methionine 207. Glutamate 198 lines the Mg(2+) pocket.

It belongs to the cytochrome c oxidase subunit 2 family. As to quaternary structure, component of the cytochrome c oxidase (complex IV, CIV), a multisubunit enzyme composed of a catalytic core of 3 subunits and several supernumerary subunits. The complex exists as a monomer or a dimer and forms supercomplexes (SCs) in the inner mitochondrial membrane with ubiquinol-cytochrome c oxidoreductase (cytochrome b-c1 complex, complex III, CIII). Cu cation serves as cofactor.

The protein resides in the mitochondrion inner membrane. It catalyses the reaction 4 Fe(II)-[cytochrome c] + O2 + 8 H(+)(in) = 4 Fe(III)-[cytochrome c] + 2 H2O + 4 H(+)(out). Component of the cytochrome c oxidase, the last enzyme in the mitochondrial electron transport chain which drives oxidative phosphorylation. The respiratory chain contains 3 multisubunit complexes succinate dehydrogenase (complex II, CII), ubiquinol-cytochrome c oxidoreductase (cytochrome b-c1 complex, complex III, CIII) and cytochrome c oxidase (complex IV, CIV), that cooperate to transfer electrons derived from NADH and succinate to molecular oxygen, creating an electrochemical gradient over the inner membrane that drives transmembrane transport and the ATP synthase. Cytochrome c oxidase is the component of the respiratory chain that catalyzes the reduction of oxygen to water. Electrons originating from reduced cytochrome c in the intermembrane space (IMS) are transferred via the dinuclear copper A center (CU(A)) of subunit 2 and heme A of subunit 1 to the active site in subunit 1, a binuclear center (BNC) formed by heme A3 and copper B (CU(B)). The BNC reduces molecular oxygen to 2 water molecules using 4 electrons from cytochrome c in the IMS and 4 protons from the mitochondrial matrix. This is Cytochrome c oxidase subunit 2 (COII) from Branchiostoma floridae (Florida lancelet).